Reading from the N-terminus, the 164-residue chain is UPF0304 protein YfbU (164 aa).

Belongs to the UPF0304 family.

This Escherichia coli O6:H1 (strain CFT073 / ATCC 700928 / UPEC) protein is UPF0304 protein YfbU (yfbU).